Consider the following 284-residue polypeptide: Bifunctional protein FolD 1 (284 aa).

NADP(+) contacts are provided by residues 166-168 (GAS) and Ile-232.

It belongs to the tetrahydrofolate dehydrogenase/cyclohydrolase family. Homodimer.

It catalyses the reaction (6R)-5,10-methylene-5,6,7,8-tetrahydrofolate + NADP(+) = (6R)-5,10-methenyltetrahydrofolate + NADPH. The enzyme catalyses (6R)-5,10-methenyltetrahydrofolate + H2O = (6R)-10-formyltetrahydrofolate + H(+). The protein operates within one-carbon metabolism; tetrahydrofolate interconversion. Its function is as follows. Catalyzes the oxidation of 5,10-methylenetetrahydrofolate to 5,10-methenyltetrahydrofolate and then the hydrolysis of 5,10-methenyltetrahydrofolate to 10-formyltetrahydrofolate. The sequence is that of Bifunctional protein FolD 1 from Ectopseudomonas mendocina (strain ymp) (Pseudomonas mendocina).